The chain runs to 146 residues: Large ribosomal subunit protein uL15 (146 aa).

Over residues 1–13 (MKLHELKPAEGSR) the composition is skewed to basic and acidic residues. The tract at residues 1–52 (MKLHELKPAEGSRKVRNRVGRGIGSGNGKTAGKGHKGQNARSGGGVRLGFEG) is disordered. 2 stretches are compositionally biased toward gly residues: residues 21–31 (RGIGSGNGKTA) and 42–52 (SGGGVRLGFEG).

The protein belongs to the universal ribosomal protein uL15 family. Part of the 50S ribosomal subunit.

In terms of biological role, binds to the 23S rRNA. The sequence is that of Large ribosomal subunit protein uL15 from Bacillus cereus (strain B4264).